Here is a 190-residue protein sequence, read N- to C-terminus: Peptidyl-tRNA hydrolase (190 aa).

Y18 contributes to the tRNA binding site. H23 serves as the catalytic Proton acceptor. Positions 69, 71, and 117 each coordinate tRNA.

Belongs to the PTH family. Monomer.

The protein localises to the cytoplasm. The catalysed reaction is an N-acyl-L-alpha-aminoacyl-tRNA + H2O = an N-acyl-L-amino acid + a tRNA + H(+). In terms of biological role, hydrolyzes ribosome-free peptidyl-tRNAs (with 1 or more amino acids incorporated), which drop off the ribosome during protein synthesis, or as a result of ribosome stalling. Functionally, catalyzes the release of premature peptidyl moieties from peptidyl-tRNA molecules trapped in stalled 50S ribosomal subunits, and thus maintains levels of free tRNAs and 50S ribosomes. The polypeptide is Peptidyl-tRNA hydrolase (Rhodococcus opacus (strain B4)).